The following is a 191-amino-acid chain: Orotate phosphoribosyltransferase (191 aa).

A 5-phospho-alpha-D-ribose 1-diphosphate-binding site is contributed by 114 to 122 (EDVVTTGKS). Thr118 and Arg146 together coordinate orotate.

This sequence belongs to the purine/pyrimidine phosphoribosyltransferase family. PyrE subfamily. In terms of assembly, homodimer. Mg(2+) serves as cofactor.

It catalyses the reaction orotidine 5'-phosphate + diphosphate = orotate + 5-phospho-alpha-D-ribose 1-diphosphate. It participates in pyrimidine metabolism; UMP biosynthesis via de novo pathway; UMP from orotate: step 1/2. In terms of biological role, catalyzes the transfer of a ribosyl phosphate group from 5-phosphoribose 1-diphosphate to orotate, leading to the formation of orotidine monophosphate (OMP). This is Orotate phosphoribosyltransferase from Clostridium botulinum (strain Kyoto / Type A2).